Here is a 724-residue protein sequence, read N- to C-terminus: 1,3-beta-galactosyl-N-acetylhexosamine phosphorylase Cphy3030 (724 aa).

Asp316 functions as the Proton donor in the catalytic mechanism.

This sequence belongs to the glycoside hydrolase 112 family.

It catalyses the reaction beta-D-galactosyl-(1-&gt;3)-N-acetyl-D-glucosamine + phosphate = alpha-D-galactose 1-phosphate + N-acetyl-D-glucosamine. Reversibly phosphorolyzes beta-D-galactopyranosyl-(1-&gt;3)-N-acetyl-D-glucosamine to form alpha-D-galactopyranose 1-phosphate and acetyl-D-glucosamine. Active towards galacto-N-biose and lacto-N-biose. Does not phosphorolyze galacto-N-tetraose or lacto-N-tetraose. In the reverse reaction has activity toward N-acetyl-D-glucosamine and N-acetyl-D-galactosamine, but not L-rhamnose, D-glucose or D-galactose. This Lachnoclostridium phytofermentans (strain ATCC 700394 / DSM 18823 / ISDg) (Clostridium phytofermentans) protein is 1,3-beta-galactosyl-N-acetylhexosamine phosphorylase Cphy3030.